The primary structure comprises 503 residues: AMP phosphorylase (503 aa).

AMP contacts are provided by residues G168, 194-199, and T203; that span reads SRAITS. D256 serves as the catalytic Proton donor. AMP contacts are provided by S264 and K288.

The protein belongs to the thymidine/pyrimidine-nucleoside phosphorylase family. Type 2 subfamily.

It catalyses the reaction AMP + phosphate = alpha-D-ribose 1,5-bisphosphate + adenine. The catalysed reaction is CMP + phosphate = cytosine + alpha-D-ribose 1,5-bisphosphate. It carries out the reaction UMP + phosphate = alpha-D-ribose 1,5-bisphosphate + uracil. Catalyzes the conversion of AMP and phosphate to adenine and ribose 1,5-bisphosphate (R15P). Exhibits phosphorylase activity toward CMP and UMP in addition to AMP. Functions in an archaeal AMP degradation pathway, together with R15P isomerase and RubisCO. The polypeptide is AMP phosphorylase (Pyrococcus horikoshii (strain ATCC 700860 / DSM 12428 / JCM 9974 / NBRC 100139 / OT-3)).